Reading from the N-terminus, the 266-residue chain is Ras-like protein family member 12 (266 aa).

GTP is bound by residues glycine 27–serine 34, aspartate 74–leucine 78, and asparagine 134–aspartate 137.

This sequence belongs to the small GTPase superfamily. Ras family.

The enzyme catalyses GTP + H2O = GDP + phosphate + H(+). The chain is Ras-like protein family member 12 (RASL12) from Bos taurus (Bovine).